The sequence spans 1528 residues: Intraflagellar transport protein 121 (1528 aa).

WD repeat units lie at residues 123-170, 244-285, 619-667, and 759-798; these read SNRA…GSAP, SSMP…SSVS, PSLT…SEFL, and PELI…REDS. A disordered region spans residues 914–933; sequence DSGLDVTASNSSQPSTQTSQ. Residues 920–933 are compositionally biased toward low complexity; that stretch reads TASNSSQPSTQTSQ.

The protein localises to the cell projection. The protein resides in the cilium. It is found in the flagellum. Its subcellular location is the cytoplasm. It localises to the cytoskeleton. The protein localises to the flagellum axoneme. The protein resides in the flagellum basal body. In terms of biological role, component of the intraflagellar transport complex A (IFT-A) involved in flagellar assembly. The polypeptide is Intraflagellar transport protein 121 (Giardia intestinalis (strain ATCC 50803 / WB clone C6) (Giardia lamblia)).